A 504-amino-acid polypeptide reads, in one-letter code: Sperm motility kinase 2A (504 aa).

The Protein kinase domain maps to 28 to 276; it reads YEMLGTIGHG…VAEVMMHPWV (249 aa). ATP is bound by residues 34-42 and K57; that span reads IGHGGSTKV. Catalysis depends on D147, which acts as the Proton acceptor. The 41-residue stretch at 294–334 folds into the UBA domain; sequence KPDPAIVKAMGHIGFQAQDIEDSLRQRKFNETMASYCLLKK. 2 stretches are compositionally biased toward polar residues: residues 376-393 and 443-454; these read PTSL…CGRS and SDESTEGHTSAS. 2 disordered regions span residues 376–403 and 443–469; these read PTSL…RSFS and SDES…PRGI.

This sequence belongs to the protein kinase superfamily. CAMK Ser/Thr protein kinase family. Smok subfamily. In terms of tissue distribution, testis-specific. Expressed in the testis from 22 days postpartum (22 dpp).

The enzyme catalyses L-seryl-[protein] + ATP = O-phospho-L-seryl-[protein] + ADP + H(+). The catalysed reaction is L-threonyl-[protein] + ATP = O-phospho-L-threonyl-[protein] + ADP + H(+). Its function is as follows. May play a role in sperm motility, especially in the regulation of flagellar function. In Mus musculus (Mouse), this protein is Sperm motility kinase 2A (Smok2a).